Reading from the N-terminus, the 145-residue chain is Bacilliredoxin GK1781 (145 aa).

This sequence belongs to the bacilliredoxin family.

The protein is Bacilliredoxin GK1781 of Geobacillus kaustophilus (strain HTA426).